Reading from the N-terminus, the 530-residue chain is MFS transporter PfmaC (530 aa).

Positions 41–76 (TTAVSDGDNQSSTMSGKTAAGDATSPASGSGSGGWF) are disordered. The segment covering 42–56 (TAVSDGDNQSSTMSG) has biased composition (polar residues). A compositionally biased stretch (low complexity) spans 59-69 (AAGDATSPASG). The next 10 membrane-spanning stretches (helical) occupy residues 165 to 182 (YWLP…LGMY), 195 to 215 (FFIG…LGCW), 226 to 246 (ALFV…QAAL), 261 to 281 (WLFI…LFCF), 324 to 344 (IFTS…SLTV), 369 to 389 (NIPT…GFVS), 396 to 416 (GPVC…FTAW), 422 to 442 (LLMA…LLAG), 456 to 476 (AFIL…FQQL), and 493 to 513 (PSAL…IPLL).

The protein belongs to the major facilitator superfamily. Allantoate permease family.

It is found in the cell membrane. MFS transporter; part of the gene cluster that mediates the biosynthesis of dihydroxynaphthalene (DHN)-melanin, a bluish-green pigment forming a dark layer in the conidial wall that protects the conidia from UV radiations. This is MFS transporter PfmaC from Pestalotiopsis fici (strain W106-1 / CGMCC3.15140).